The primary structure comprises 640 residues: MQDSYYLMSKNQFQDLYNDNSIYFNDESNIENIISCENVPFGSTIEASNNFDSNYNCNNINNGGINSFNNSSSIFKSMTPKKTPNGLKNLNNNIPTVNLAPISENVSTDTLNSQIVPSFQSNNIPQQIPSSNNNNNINNNNNTISSNNNNNTASIPITTTPTVVNNNNNNNNNNNNNNNNNNNNNNNNNNNNNNNNNNNNNNNNNNIPISNSCNFSNNLEKSTPIVNLIQYEQQPQQNNNIYQNNDTSNLNNNNIVCHTKDNENIETISSNNNNNYTYQDPNYQDPEKVQLTMNCFKLIQYCSQLTNLTKQAFSNPSAAACELETLSTMGNYIQYEISSLKSSLVKNLPNEAQQQQIRLQQQQSQQQHQQHQQHQQHQQPPTNIPQHINNCNIPRSPFDSCVPNSSYINSPLVANDFGYYSPNSMMNNNNDKINSEQGVFSSTISSPLPINSSYTSPYIKNQNSPQSKVVKKQLKNSKQSPTYINLTENMIRAQTKKQKKTISRVCVNCKTSDTPEWRRGPQGAKTLCNACGIRYRLQQQQVPQSNLNSPRESYAVIPTCDENIKQQTSQNSTTNINSSTTTTTATIQQQQQQNIPQQFPQPIQSPLKMLNIDQQILNSYENNFKNQFIEKDFLLMDSFE.

2 disordered regions span residues 121–209 and 355–390; these read SNNI…NIPI and QQIRLQQQQSQQQHQQHQQHQQHQQPPTNIPQHINN. Low complexity-rich tracts occupy residues 122-209 and 355-379; these read NNIP…NIPI and QQIRLQQQQSQQQHQQHQQHQQHQQ. The segment covering 380-390 has biased composition (polar residues); the sequence is PPTNIPQHINN. The segment at 506–531 adopts a GATA-type zinc-finger fold; the sequence is CVNCKTSDTPEWRRGPQGAKTLCNAC.

The protein is GATA zinc finger domain-containing protein 12 (gtaL) of Dictyostelium discoideum (Social amoeba).